The chain runs to 332 residues: Phosphate acyltransferase (332 aa).

Belongs to the PlsX family. As to quaternary structure, homodimer. Probably interacts with PlsY.

The protein resides in the cytoplasm. The catalysed reaction is a fatty acyl-[ACP] + phosphate = an acyl phosphate + holo-[ACP]. Its pathway is lipid metabolism; phospholipid metabolism. Catalyzes the reversible formation of acyl-phosphate (acyl-PO(4)) from acyl-[acyl-carrier-protein] (acyl-ACP). This enzyme utilizes acyl-ACP as fatty acyl donor, but not acyl-CoA. This Streptococcus mutans serotype c (strain ATCC 700610 / UA159) protein is Phosphate acyltransferase.